Here is a 178-residue protein sequence, read N- to C-terminus: Protein GrpE (178 aa).

This sequence belongs to the GrpE family. As to quaternary structure, homodimer.

Its subcellular location is the cytoplasm. Its function is as follows. Participates actively in the response to hyperosmotic and heat shock by preventing the aggregation of stress-denatured proteins, in association with DnaK and GrpE. It is the nucleotide exchange factor for DnaK and may function as a thermosensor. Unfolded proteins bind initially to DnaJ; upon interaction with the DnaJ-bound protein, DnaK hydrolyzes its bound ATP, resulting in the formation of a stable complex. GrpE releases ADP from DnaK; ATP binding to DnaK triggers the release of the substrate protein, thus completing the reaction cycle. Several rounds of ATP-dependent interactions between DnaJ, DnaK and GrpE are required for fully efficient folding. The sequence is that of Protein GrpE from Rickettsia akari (strain Hartford).